The following is a 280-amino-acid chain: Thiamine-phosphate synthase (280 aa).

Residues 1 to 64 (MGWSGSPLTL…ATGRGGLRMT (64 aa)) are disordered. A compositionally biased stretch (basic and acidic residues) spans 42–55 (GRGELRSRERRGEA). 4-amino-2-methyl-5-(diphosphooxymethyl)pyrimidine-binding positions include 104-108 (QLRCK) and Asn-141. Mg(2+) contacts are provided by Asp-142 and Asp-161. Ser-179 is a binding site for 4-amino-2-methyl-5-(diphosphooxymethyl)pyrimidine. 205 to 207 (TPT) serves as a coordination point for 2-[(2R,5Z)-2-carboxy-4-methylthiazol-5(2H)-ylidene]ethyl phosphate. Lys-208 serves as a coordination point for 4-amino-2-methyl-5-(diphosphooxymethyl)pyrimidine. Gly-236 lines the 2-[(2R,5Z)-2-carboxy-4-methylthiazol-5(2H)-ylidene]ethyl phosphate pocket.

Belongs to the thiamine-phosphate synthase family. Mg(2+) is required as a cofactor.

The enzyme catalyses 2-[(2R,5Z)-2-carboxy-4-methylthiazol-5(2H)-ylidene]ethyl phosphate + 4-amino-2-methyl-5-(diphosphooxymethyl)pyrimidine + 2 H(+) = thiamine phosphate + CO2 + diphosphate. The catalysed reaction is 2-(2-carboxy-4-methylthiazol-5-yl)ethyl phosphate + 4-amino-2-methyl-5-(diphosphooxymethyl)pyrimidine + 2 H(+) = thiamine phosphate + CO2 + diphosphate. It catalyses the reaction 4-methyl-5-(2-phosphooxyethyl)-thiazole + 4-amino-2-methyl-5-(diphosphooxymethyl)pyrimidine + H(+) = thiamine phosphate + diphosphate. The protein operates within cofactor biosynthesis; thiamine diphosphate biosynthesis; thiamine phosphate from 4-amino-2-methyl-5-diphosphomethylpyrimidine and 4-methyl-5-(2-phosphoethyl)-thiazole: step 1/1. Its function is as follows. Condenses 4-methyl-5-(beta-hydroxyethyl)thiazole monophosphate (THZ-P) and 2-methyl-4-amino-5-hydroxymethyl pyrimidine pyrophosphate (HMP-PP) to form thiamine monophosphate (TMP). In Deinococcus radiodurans (strain ATCC 13939 / DSM 20539 / JCM 16871 / CCUG 27074 / LMG 4051 / NBRC 15346 / NCIMB 9279 / VKM B-1422 / R1), this protein is Thiamine-phosphate synthase.